A 927-amino-acid polypeptide reads, in one-letter code: Roc-COR-CHAT protease (927 aa).

LRR repeat units follow at residues A38–Q61, L83–S107, Q109–G125, and C127–A151. Residues L152–S170 are LRR 5. LRR repeat units lie at residues M171–I194 and E195–R217. The COR domain occupies E436 to L623. Catalysis depends on residues H796 and C840.

A dedicated protease for gasdermin bGSDM; cleaves the bGSDM precursor, releasing the pore-forming moiety, which integrates into the membrane and triggers cell death. Probably involved in defense against bacteriophages. Expression of bGSDM and this neighboring protease is highly toxic in E.coli. Cells expressing the gene pair stop dividing and lose membrane integrity. Both proteins are required to kill E.coli. The bGSDM recognition site is larger than the 8 residues surrounding the cleavage site; replacement of the endogenous recognition site by the Runella site (NRVLGENM) in a number of other bGSDMs is not sufficient for them to be cleaved. The chain is Roc-COR-CHAT protease from Runella zeae (strain ATCC BAA-293 / DSM 19591 / LMG 21438 / NS12).